The primary structure comprises 889 residues: Translation initiation factor IF-2 (889 aa).

A disordered region spans residues 1–299; sequence MTDNKDDKTL…EKFKRSQMQE (299 aa). The span at 61–76 shows a compositional bias: low complexity; the sequence is ITPVAATPAARPAEQR. The segment covering 77–93 has biased composition (pro residues); sequence PMPPQPSGRPAPQPQPH. Over residues 116–182 the composition is skewed to basic and acidic residues; it reads MEARRRALAE…EAEKTEEKVE (67 aa). The span at 196 to 215 shows a compositional bias: low complexity; the sequence is RPQPGRAAPAATPAAPDGAA. Over residues 220–231 the composition is skewed to basic and acidic residues; the sequence is RGTESEEDERRR. In terms of domain architecture, tr-type G spans 387-554; sequence SRPPIVTIMG…AILLQSEILD (168 aa). Residues 396–403 form a G1 region; it reads GHVDHGKT. 396 to 403 contributes to the GTP binding site; that stretch reads GHVDHGKT. The tract at residues 421-425 is G2; it reads GITQH. A G3 region spans residues 442-445; sequence DTPG. Residues 442 to 446 and 496 to 499 contribute to the GTP site; these read DTPGH and NKID. The interval 496 to 499 is G4; it reads NKID. Residues 532–534 are G5; sequence SAK.

The protein belongs to the TRAFAC class translation factor GTPase superfamily. Classic translation factor GTPase family. IF-2 subfamily.

It is found in the cytoplasm. Functionally, one of the essential components for the initiation of protein synthesis. Protects formylmethionyl-tRNA from spontaneous hydrolysis and promotes its binding to the 30S ribosomal subunits. Also involved in the hydrolysis of GTP during the formation of the 70S ribosomal complex. The polypeptide is Translation initiation factor IF-2 (Rhizobium meliloti (strain 1021) (Ensifer meliloti)).